The following is a 95-amino-acid chain: Large ribosomal subunit protein bL27 (95 aa).

A propeptide spanning residues 1-12 (MLLIKKINLQFF) is cleaved from the precursor. The disordered stretch occupies residues 17-37 (GVGSTKNGRDSNPKYLGAKKS).

It belongs to the bacterial ribosomal protein bL27 family. The N-terminus is cleaved by ribosomal processing cysteine protease Prp.

This Malacoplasma penetrans (strain HF-2) (Mycoplasma penetrans) protein is Large ribosomal subunit protein bL27.